We begin with the raw amino-acid sequence, 156 residues long: Small ribosomal subunit protein uS7 (156 aa).

It belongs to the universal ribosomal protein uS7 family. Part of the 30S ribosomal subunit. Contacts proteins S9 and S11.

Functionally, one of the primary rRNA binding proteins, it binds directly to 16S rRNA where it nucleates assembly of the head domain of the 30S subunit. Is located at the subunit interface close to the decoding center, probably blocks exit of the E-site tRNA. In Methylibium petroleiphilum (strain ATCC BAA-1232 / LMG 22953 / PM1), this protein is Small ribosomal subunit protein uS7.